A 192-amino-acid chain; its full sequence is uncharacterized protein (192 aa).

This is an uncharacterized protein from Nostoc sp. (strain PCC 7120 / SAG 25.82 / UTEX 2576).